The chain runs to 123 residues: Holo-[acyl-carrier-protein] synthase (123 aa).

Residues aspartate 8 and glutamate 50 each coordinate Mg(2+).

It belongs to the P-Pant transferase superfamily. AcpS family. Requires Mg(2+) as cofactor.

Its subcellular location is the cytoplasm. It catalyses the reaction apo-[ACP] + CoA = holo-[ACP] + adenosine 3',5'-bisphosphate + H(+). Functionally, transfers the 4'-phosphopantetheine moiety from coenzyme A to a Ser of acyl-carrier-protein. The polypeptide is Holo-[acyl-carrier-protein] synthase (Kocuria rhizophila (strain ATCC 9341 / DSM 348 / NBRC 103217 / DC2201)).